Consider the following 406-residue polypeptide: Probable tRNA sulfurtransferase (406 aa).

The 107-residue stretch at 60–166 (EPVMERLKQV…LNGIYLTSAK (107 aa)) folds into the THUMP domain. Residues 184-185 (ML), 209-210 (HF), arginine 266, glycine 288, and glutamine 297 contribute to the ATP site.

It belongs to the ThiI family.

The protein resides in the cytoplasm. The catalysed reaction is [ThiI sulfur-carrier protein]-S-sulfanyl-L-cysteine + a uridine in tRNA + 2 reduced [2Fe-2S]-[ferredoxin] + ATP + H(+) = [ThiI sulfur-carrier protein]-L-cysteine + a 4-thiouridine in tRNA + 2 oxidized [2Fe-2S]-[ferredoxin] + AMP + diphosphate. The enzyme catalyses [ThiS sulfur-carrier protein]-C-terminal Gly-Gly-AMP + S-sulfanyl-L-cysteinyl-[cysteine desulfurase] + AH2 = [ThiS sulfur-carrier protein]-C-terminal-Gly-aminoethanethioate + L-cysteinyl-[cysteine desulfurase] + A + AMP + 2 H(+). Its pathway is cofactor biosynthesis; thiamine diphosphate biosynthesis. In terms of biological role, catalyzes the ATP-dependent transfer of a sulfur to tRNA to produce 4-thiouridine in position 8 of tRNAs, which functions as a near-UV photosensor. Also catalyzes the transfer of sulfur to the sulfur carrier protein ThiS, forming ThiS-thiocarboxylate. This is a step in the synthesis of thiazole, in the thiamine biosynthesis pathway. The sulfur is donated as persulfide by IscS. In Limosilactobacillus fermentum (strain NBRC 3956 / LMG 18251) (Lactobacillus fermentum), this protein is Probable tRNA sulfurtransferase.